A 227-amino-acid polypeptide reads, in one-letter code: Ras-related protein Rab-3C (227 aa).

The GTP site is built by S39, G42, K43, T44, S45, T56, S57, S61, and T62. T44 is a Mg(2+) binding site. Positions 53-66 match the Switch 1 motif; it reads DSFTSAFVSTVGID. T62 and D85 together coordinate Mg(2+). The residue at position 86 (T86) is a Phosphothreonine; by LRRK2. A Switch 2 motif is present at residues 86 to 104; that stretch reads TAGQERYRTITTAYYRGAM. G88, N143, K144, D146, A174, and K175 together coordinate GTP. A phosphoserine mark is found at S196 and S198. The disordered stretch occupies residues 202–227; the sequence is DPAITAAKQSTRLKETPPPPQPNCGC. T206 is subject to Phosphothreonine. Pro residues predominate over residues 217–227; the sequence is TPPPPQPNCGC. 2 S-geranylgeranyl cysteine lipidation sites follow: C225 and C227. The residue at position 227 (C227) is a Cysteine methyl ester.

Belongs to the small GTPase superfamily. Rab family. Interacts with RIMS1, RIMS2, RPH3A and RPH3AL. Interacts with GDI2, CHM and CHML; phosphorylation at Thr-86 disrupts these interactions. Interacts with MADD (via uDENN domain); the GTP-bound form is preferred for interaction. Mg(2+) serves as cofactor. Post-translationally, phosphorylation of Thr-86 in the switch II region by LRRK2 prevents the association of RAB regulatory proteins, including CHM, CHML and RAB GDP dissociation inhibitor GDI2.

The protein localises to the cell membrane. The catalysed reaction is GTP + H2O = GDP + phosphate + H(+). Its activity is regulated as follows. Regulated by guanine nucleotide exchange factors (GEFs) which promote the exchange of bound GDP for free GTP. Regulated by GTPase activating proteins (GAPs) which increase the GTP hydrolysis activity. Inhibited by GDP dissociation inhibitors (GDIs) which prevent Rab-GDP dissociation. Its function is as follows. The small GTPases Rab are key regulators of intracellular membrane trafficking, from the formation of transport vesicles to their fusion with membranes. Rabs cycle between an inactive GDP-bound form and an active GTP-bound form that is able to recruit to membranes different sets of downstream effectors directly responsible for vesicle formation, movement, tethering and fusion. This Mus musculus (Mouse) protein is Ras-related protein Rab-3C.